The sequence spans 424 residues: Adenylosuccinate synthetase (424 aa).

GTP is bound by residues 11 to 17 and 39 to 41; these read GDEGKGK and GHT. Residue D12 is the Proton acceptor of the active site. Residues D12 and G39 each contribute to the Mg(2+) site. IMP contacts are provided by residues 12 to 15, 37 to 40, T127, R141, Q223, T238, and R302; these read DEGK and NAGH. Residue H40 is the Proton donor of the active site. Position 298–304 (298–304) interacts with substrate; the sequence is TTTGRGR. GTP-binding positions include R304, 330 to 332, and 412 to 414; these read KLD and SVG.

It belongs to the adenylosuccinate synthetase family. In terms of assembly, homodimer. Requires Mg(2+) as cofactor.

It localises to the cytoplasm. It carries out the reaction IMP + L-aspartate + GTP = N(6)-(1,2-dicarboxyethyl)-AMP + GDP + phosphate + 2 H(+). It functions in the pathway purine metabolism; AMP biosynthesis via de novo pathway; AMP from IMP: step 1/2. Functionally, plays an important role in the de novo pathway of purine nucleotide biosynthesis. Catalyzes the first committed step in the biosynthesis of AMP from IMP. The protein is Adenylosuccinate synthetase of Methanosarcina barkeri (strain Fusaro / DSM 804).